A 49-amino-acid polypeptide reads, in one-letter code: Large ribosomal subunit protein bL33 (49 aa).

The protein belongs to the bacterial ribosomal protein bL33 family.

In Clostridium acetobutylicum (strain ATCC 824 / DSM 792 / JCM 1419 / IAM 19013 / LMG 5710 / NBRC 13948 / NRRL B-527 / VKM B-1787 / 2291 / W), this protein is Large ribosomal subunit protein bL33.